Here is a 130-residue protein sequence, read N- to C-terminus: MSWKVPMLVGLVVLGTHIWTINKEFLDVTKDLDYFVASVEFAVAQFNDNNSEENTYRLLEVGRAQKKTWTMIFLMDLEMGRTICKKHDENIHNCPLLQGSGEKKVHCVFQVDARPWFSHFTVLTSTCVPT.

The N-terminal stretch at 1–23 (MSWKVPMLVGLVVLGTHIWTINK) is a signal peptide. In terms of domain architecture, Cystatin spans 37-116 (ASVEFAVAQF…CVFQVDARPW (80 aa)). 2 disulfides stabilise this stretch: C84-C94 and C107-C127.

This sequence belongs to the cystatin family.

Its subcellular location is the secreted. Functionally, may play a specialized role in spermatogenesis. The polypeptide is Cystatin domain-containing protein 1 (Rattus norvegicus (Rat)).